The primary structure comprises 465 residues: Glutamate--tRNA ligase 1 (465 aa).

Residues 8 to 18 (PSPTGLMHLGN) carry the 'HIGH' region motif. Positions 249 to 253 (PLSKR) match the 'KMSKS' region motif. Position 252 (Lys-252) interacts with ATP.

Belongs to the class-I aminoacyl-tRNA synthetase family. Glutamate--tRNA ligase type 1 subfamily. Monomer.

It localises to the cytoplasm. It carries out the reaction tRNA(Glu) + L-glutamate + ATP = L-glutamyl-tRNA(Glu) + AMP + diphosphate. In terms of biological role, catalyzes the attachment of glutamate to tRNA(Glu) in a two-step reaction: glutamate is first activated by ATP to form Glu-AMP and then transferred to the acceptor end of tRNA(Glu). This chain is Glutamate--tRNA ligase 1, found in Coxiella burnetii (strain CbuG_Q212) (Coxiella burnetii (strain Q212)).